The chain runs to 429 residues: MRVLILGSGVIGVTSAWYLAQAGCEVTVVDRQPAAALETSYANAGQLSFGYTSPWAAPGVPGKAVKWLFEQHAPLSIRPTRDLRQLAWLSQMLRNCTAERYAVNKARMVRMSDYSRDCLNALRAETGIEFEGRQLGTTQLFRTQQQLDAAAQDIEVLAQYGVPYELLSPAQIAQFEPGLAGGGAQMAGALRLPEDQTGDCRLFTQRLAELATQAGVTFRYGQQIERLEHAGGQITGVQIDGRIETADRYVLALGSYSADVLLSLGLHLPVYPLKGYSLTIPIVDAQRAPTSTVLDESYKIALTRFDDRIRVGGMAEVAGFDMSLNPRRRATLEMVVNDLFPGGGDLAQAEFWTGLRPATPDGTPVVGATPYANLFLNTGHGTLGWTMACGSGRYLADLMQGRTPEIDTEGLDVFRYLSPRSVRPHREAA.

3-17 is a binding site for FAD; it reads VLILGSGVIGVTSAW.

The protein belongs to the DadA oxidoreductase family. It depends on FAD as a cofactor.

The catalysed reaction is a D-alpha-amino acid + A + H2O = a 2-oxocarboxylate + AH2 + NH4(+). Its function is as follows. Oxidative deamination of D-amino acids. The polypeptide is D-amino acid dehydrogenase (Xanthomonas axonopodis pv. citri (strain 306)).